Here is a 532-residue protein sequence, read N- to C-terminus: Deoxyribodipyrimidine photo-lyase (532 aa).

Residues 1–57 form a disordered region; it reads MDSKKRSHSTGGEAENMESQESKAKRKPLQKHQFSKSNVVQKEEKDKTEGEEKGAEG. Residues 24–34 show a composition bias toward basic residues; that stretch reads AKRKPLQKHQF. Residues 41–55 show a composition bias toward basic and acidic residues; that stretch reads QKEEKDKTEGEEKGA. Residues 97 to 229 form the Photolyase/cryptochrome alpha/beta domain; the sequence is QAFVYWMSRD…QVDAHNIVPC (133 aa). Arg322 contacts DNA. Interaction with DNA regions lie at residues 368–376 and 442–443; these read EAVVRRELA and GF. 468 to 470 contributes to the FAD binding site; it reads YLN.

Belongs to the DNA photolyase class-2 family. FAD is required as a cofactor.

It carries out the reaction cyclobutadipyrimidine (in DNA) = 2 pyrimidine residues (in DNA).. In terms of biological role, involved in repair of UV radiation-induced DNA damage. Catalyzes the light-dependent monomerization (300-600 nm) of cyclobutyl pyrimidine dimers (in cis-syn configuration), which are formed between adjacent bases on the same DNA strand upon exposure to ultraviolet radiation. The chain is Deoxyribodipyrimidine photo-lyase (PHR) from Potorous tridactylus (Potoroo).